We begin with the raw amino-acid sequence, 644 residues long: Biosynthetic arginine decarboxylase (644 aa).

Position 105 is an N6-(pyridoxal phosphate)lysine (Lys-105). 287 to 297 contacts substrate; that stretch reads LDVGGGLGIDY.

The protein belongs to the Orn/Lys/Arg decarboxylase class-II family. SpeA subfamily. Mg(2+) serves as cofactor. The cofactor is pyridoxal 5'-phosphate.

It catalyses the reaction L-arginine + H(+) = agmatine + CO2. Functionally, catalyzes the biosynthesis of agmatine from arginine. The chain is Biosynthetic arginine decarboxylase from Parasynechococcus marenigrum (strain WH8102).